We begin with the raw amino-acid sequence, 318 residues long: Petal death protein (318 aa).

Positions 1 to 3 (MAP) are cleaved as a propeptide — removed in mature form. Residues 1–24 (MAPPNGTTNGETEVATQGSYTAVS) form a disordered region. Residues D107, D109, and K142 each contribute to the Mg(2+) site.

This sequence belongs to the isocitrate lyase/PEP mutase superfamily. In terms of assembly, homodimer and homotetramer formed by a dimer of homodimer. The cofactor is Mg(2+). Mn(2+) is required as a cofactor. It depends on Fe(2+) as a cofactor. Co(2+) serves as cofactor. In terms of tissue distribution, accumulates in senescing flower petals.

The enzyme catalyses oxaloacetate + H2O = oxalate + acetate + H(+). Catalyzes cleavage of the C(2)-C(3) bond in oxaloacetate and in (2R)-alkyl malate derivatives to form oxalate and acetate, and alkyl carboxylates and R-ketocarboxylates, respectively. This chain is Petal death protein, found in Dianthus caryophyllus (Carnation).